The primary structure comprises 518 residues: Motile sperm domain-containing protein 2 (518 aa).

The Cytoplasmic segment spans residues 1 to 496 (MAENHAQNKA…QVQRCIWFQQ (496 aa)). Residues 82-239 (ESSIPRWLLE…HMGGTDPFKY (158 aa)) form the CRAL-TRIO domain. The segment at 252-308 (PLCENGPITSEDETSSKEDIESDGKETLETISNEEQTPLLKKINPTESTSKAEENEK) is disordered. Over residues 265–279 (TSSKEDIESDGKETL) the composition is skewed to basic and acidic residues. In terms of domain architecture, MSP spans 327 to 445 (LLHISPAEEL…MEHRLRCHTV (119 aa)). Residues 365–366 (RT) form a required for FFAT motif binding and phosphorylated FFAT motif binding region. The chain crosses the membrane as a helical; Anchor for type IV membrane protein span at residues 497–518 (LLLSLTMLLLAFVTSFFYLLYS).

Homooligomer. Interacts (via MSP domain) with STARD3NL (via FFAT motif), RMDN3 (via FFAT motif), OSBPL1A (via FFAT motif) and CERT1 (via FFAT motif). Interacts (via MSP domain) with STARD3 (via phosphorylated FFAT motif); this interaction depends on the critical phosphorylation of STARD3 on 'Ser-209'. Interacts with RB1CC1 (via phosphorylated FFAT motif), MIGA2 (via phosphorylated FFAT motif) and OSBPL1A (via FFAT motif). As to expression, highly expressed in CD14(+) monocytes, and at lower levels in neutrophils. Does not show significant expression in B-cells or T-cells.

Its subcellular location is the endoplasmic reticulum membrane. Endoplasmic reticulum-anchored protein that mediates the formation of contact sites between the endoplasmic (ER) and endosomes, mitochondria or Golgi through interaction with conventional- and phosphorylated-FFAT-containing organelle-bound proteins. In addition, forms endoplasmic reticulum (ER)-lipid droplets (LDs) contacts through a direct protein-membrane interaction and participates in LDs homeostasis. The attachment mechanism involves an amphipathic helix that has an affinity for lipid packing defects present at the surface of LDs. Promotes migration of primary monocytes and neutrophils, in response to various chemokines. The sequence is that of Motile sperm domain-containing protein 2 from Homo sapiens (Human).